Reading from the N-terminus, the 848-residue chain is Dolabradiene synthase KSL4, chloroplastic (848 aa).

The transit peptide at 1–64 (MASLSFASSH…SRMPRNVDTH (64 aa)) directs the protein to the chloroplast. Residues 148–168 (QRSDGSWGPDGGSGDHPSSPL) form a disordered region. Residues Asp597, Asp601, Asn742, Ser746, and Glu750 each coordinate Mg(2+). The short motif at 597-601 (DDLFD) is the DDXXD motif element.

The protein belongs to the terpene synthase family. Requires Mg(2+) as cofactor.

It is found in the plastid. The protein localises to the chloroplast. It catalyses the reaction ent-copalyl diphosphate = dolabradiene + diphosphate. Functionally, involved in the production of antifungal dolabralexin phytoalexins in response to biotic and abiotic stresses. In response to fungal infection and in associtation with AN2, is involved in the production dolabradiene, a type of antifungal phytoalexin. Converts ent-copalyl disphosphate (ent-CPP) to dolabradiene. This chain is Dolabradiene synthase KSL4, chloroplastic, found in Zea mays (Maize).